Consider the following 586-residue polypeptide: Dolichyl-diphosphooligosaccharide--protein glycosyltransferase subunit 1 (586 aa).

The signal sequence occupies residues 1–15; sequence MRLLFAIALLGAVFA. Residues 16–421 are Lumenal-facing; it reads EDAWKAANVD…EFEFVDMLRE (406 aa). The helical transmembrane segment at 422–442 threads the bilayer; sequence PLLASAFFFSLFFVIIVYSRF. Residues 443–586 lie on the Cytoplasmic side of the membrane; the sequence is DFTISSDPAK…NRADSVLASI (144 aa).

This sequence belongs to the OST1 family. In terms of assembly, component of the oligosaccharyltransferase (OST) complex.

The protein resides in the endoplasmic reticulum membrane. The protein localises to the cytoplasmic granule. It participates in protein modification; protein glycosylation. Functionally, subunit of the oligosaccharyl transferase (OST) complex that catalyzes the initial transfer of a defined glycan (Glc(3)Man(9)GlcNAc(2) in eukaryotes) from the lipid carrier dolichol-pyrophosphate to an asparagine residue within an Asn-X-Ser/Thr consensus motif in nascent polypeptide chains, the first step in protein N-glycosylation. N-glycosylation occurs cotranslationally and the complex associates with the Sec61 complex at the channel-forming translocon complex that mediates protein translocation across the endoplasmic reticulum (ER). All subunits are required for a maximal enzyme activity. The chain is Dolichyl-diphosphooligosaccharide--protein glycosyltransferase subunit 1 from Caenorhabditis elegans.